The chain runs to 373 residues: tRNA-specific 2-thiouridylase MnmA (373 aa).

ATP contacts are provided by residues 12 to 19 and Met-38; that span reads GMSGGVDS. Residues 98 to 100 are interaction with target base in tRNA; the sequence is NPD. The Nucleophile role is filled by Cys-103. Cys-103 and Cys-200 are oxidised to a cystine. An ATP-binding site is contributed by Gly-127. The segment at 150-152 is interaction with tRNA; it reads KDQ. Catalysis depends on Cys-200, which acts as the Cysteine persulfide intermediate. The tract at residues 312 to 313 is interaction with tRNA; it reads RY.

The protein belongs to the MnmA/TRMU family.

It localises to the cytoplasm. It carries out the reaction S-sulfanyl-L-cysteinyl-[protein] + uridine(34) in tRNA + AH2 + ATP = 2-thiouridine(34) in tRNA + L-cysteinyl-[protein] + A + AMP + diphosphate + H(+). Catalyzes the 2-thiolation of uridine at the wobble position (U34) of tRNA, leading to the formation of s(2)U34. The protein is tRNA-specific 2-thiouridylase MnmA of Streptococcus pyogenes serotype M12 (strain MGAS2096).